A 462-amino-acid chain; its full sequence is N-myc proto-oncogene protein (462 aa).

Residues 19–47 are interaction with AURKA; that stretch reads LEFDSLQPCFYPDEDDFYFGGPDSTPPGE. The segment at 61-90 is interaction with AURKA and FBXW7; it reads LSPSRAFPEHSPEPSNWATEMLLPEADLWG. The short motif at 76 to 85 is the 9aaTAD element; that stretch reads NWATEMLLPE. 3 disordered regions span residues 133–177, 232–290, and 332–390; these read EKLQ…ATLP, AAPA…SNNK, and APSP…LERQ. The span at 138–174 shows a compositional bias: low complexity; that stretch reads GHGPPGASSSCPAPGVGASSSGGRALGGSASAGRTGA. The span at 257-276 shows a compositional bias: acidic residues; sequence TLSDSDDEDDEEEDEEEEID. S259 and S261 each carry phosphoserine; by CK2. The bHLH domain maps to 379–431; sequence ERRRNHNILERQRRNDLRSSFLTLRDHVPELVKNEKAAKVVILKKATEYVHAL. A leucine-zipper region spans residues 431–452; that stretch reads LQANEHQLLLEKEKLQARQQQL.

In terms of assembly, efficient DNA binding requires dimerization with another bHLH protein. Binds DNA as a heterodimer with MAX. Interacts with KDM5A, KDM5B and HUWE1. Interacts with MYCNOS. Interacts with AURKA; interaction is phospho-independent and triggers AURKA activation; AURKA competes with FBXW7 for binding to unphosphorylated MYCN but not for binding to unphosphorylated MYCN. Interacts with FBXW7; FBXW7 competes with AURKA for binding to unphosphorylated MYCN but not for binding to phosphorylated MYCN. In terms of processing, phosphorylated by GSK3-beta which may promote its degradation. Phosphorylated by AURKA.

Its subcellular location is the nucleus. Functionally, positively regulates the transcription of MYCNOS in neuroblastoma cells. This Rattus norvegicus (Rat) protein is N-myc proto-oncogene protein (Mycn).